An 837-amino-acid polypeptide reads, in one-letter code: Katanin p80 WD40 repeat-containing subunit B1 homolog KTN80.4 (837 aa).

WD repeat units follow at residues 14-54 (AHSA…AILS), 57-96 (GHSS…IVRT), 99-138 (GHRS…CIHT), 141-182 (GHTR…TEFK), 184-222 (HEGQ…LIGS), 225-265 (PETA…DGVD), and 267-304 (GWSR…TEPC). A DWD box motif is present at residues 115–131 (FFASGSLDTNLKIWDIR). Disordered stretches follow at residues 307 to 328 (GDTA…DPVV), 358 to 462 (GRLS…ANPV), and 501 to 614 (LQAA…LVIN). 2 stretches are compositionally biased toward polar residues: residues 376-387 (IGRSSTSQNSES) and 412-450 (TFSS…TSRR). The segment covering 509–520 (SPSSRNNPDLPD) has biased composition (low complexity). Basic and acidic residues-rich tracts occupy residues 553 to 563 (ATERSINDFRY) and 580 to 595 (RNHD…RSNR).

The protein belongs to the WD repeat KATNB1 family. Component of KTN80-KTN1 complexes composed of a hexamer of KTN1-KTN80 heterodimers that sense microtubule (MT) geometry to confer precise MT severing. Interacts directly with AAA1/KTN1, and weakly with KTN80.1 and KTN80.3. As to expression, expressed in siliques, flowers, leaves, stems and roots.

The protein resides in the cytoplasm. It is found in the cytoskeleton. Its function is as follows. May participate in a complex which severs microtubules in an ATP-dependent manner. This activity may promote rapid reorganization of cellular microtubule arrays. Confers precision to microtubule (MT) severing by specific targeting of KTN1 to MT cleavage sites such as crossover or branching nucleation sites. Together with other KTN80s, regulates cell elongation by modulating MT organization. In Arabidopsis thaliana (Mouse-ear cress), this protein is Katanin p80 WD40 repeat-containing subunit B1 homolog KTN80.4.